The following is a 1163-amino-acid chain: Putative beta-glucuronidase (1163 aa).

An N-terminal signal peptide occupies residues 1 to 20 (MPRFLKYILGLFLISISAFG).

Belongs to the glycosyl hydrolase 2 family.

It localises to the periplasm. It catalyses the reaction a beta-D-glucuronoside + H2O = D-glucuronate + an alcohol. Functionally, glycoside hydrolase involved in ulvan degradation. Ulvan is the main polysaccharide component of the Ulvales (green seaweed) cell wall. It is composed of disaccharide building blocks comprising 3-sulfated rhamnose (Rha3S) linked to D-glucuronic acid (GlcA), L-iduronic acid (IduA), or D-xylose (Xyl). The chain is Putative beta-glucuronidase from Formosa agariphila (strain DSM 15362 / KCTC 12365 / LMG 23005 / KMM 3901 / M-2Alg 35-1).